A 446-amino-acid polypeptide reads, in one-letter code: Tubulin beta-3 chain (446 aa).

Positions 11, 69, 138, 142, 143, 144, 204, and 226 each coordinate GTP. Position 69 (glutamate 69) interacts with Mg(2+). The interval 421 to 446 is disordered; sequence EYQQYQDATAEEEDYEEEEEDEEVAA. Acidic residues predominate over residues 429 to 446; sequence TAEEEDYEEEEEDEEVAA.

It belongs to the tubulin family. Dimer of alpha and beta chains. A typical microtubule is a hollow water-filled tube with an outer diameter of 25 nm and an inner diameter of 15 nM. Alpha-beta heterodimers associate head-to-tail to form protofilaments running lengthwise along the microtubule wall with the beta-tubulin subunit facing the microtubule plus end conferring a structural polarity. Microtubules usually have 13 protofilaments but different protofilament numbers can be found in some organisms and specialized cells. Mg(2+) is required as a cofactor. As to expression, expressed in roots, second node, leaf sheaths, and suspension cultured cells.

The protein resides in the cytoplasm. It localises to the cytoskeleton. In terms of biological role, tubulin is the major constituent of microtubules, a cylinder consisting of laterally associated linear protofilaments composed of alpha- and beta-tubulin heterodimers. Microtubules grow by the addition of GTP-tubulin dimers to the microtubule end, where a stabilizing cap forms. Below the cap, tubulin dimers are in GDP-bound state, owing to GTPase activity of alpha-tubulin. The protein is Tubulin beta-3 chain (TUBB3) of Oryza sativa subsp. japonica (Rice).